The following is a 433-amino-acid chain: MTDILKTTYSEEVFSSALELMPGGVSSPVRAFKSVGGQPIVFDRVKGPYAWDIDGNRYIDYIGSWGPAICGHAHPEVITALQEAIEKGTSFGAPCVLENKLAEMVIDAVPSVEMVRFVNSGTEACMAVLRLMRAFTGRDKVIKFDGCYHGHADMFLVKAGSGVATLGLPDSPGVPRTTTANTLTAPYNDLEAVKKLFSENPDAISGVILEPIVGNAGFITPEPGFLEGLRELTTENGSLLVFDEVMTGFRISYGGAQEKFGVTPDLTTLGKVIGGGLPVGAYGGKKEIMSMVAPSGPVYQAGTLSGNPLAMTAGIKTLELLKQEGTYEKLESTTSRLIEGIIQSAENNGIAINGGSVSAMFGFFLCEGPVRNFEEAKTNNSELFGKLHREMLKRGVYLAPSPFEAGFTSLAHSEEEIDRTLEAFDQSFSVIKN.

An N6-(pyridoxal phosphate)lysine modification is found at Lys271.

Belongs to the class-III pyridoxal-phosphate-dependent aminotransferase family. HemL subfamily. In terms of assembly, homodimer. Pyridoxal 5'-phosphate serves as cofactor.

It localises to the cytoplasm. The enzyme catalyses (S)-4-amino-5-oxopentanoate = 5-aminolevulinate. It functions in the pathway porphyrin-containing compound metabolism; protoporphyrin-IX biosynthesis; 5-aminolevulinate from L-glutamyl-tRNA(Glu): step 2/2. It participates in porphyrin-containing compound metabolism; chlorophyll biosynthesis. This is Glutamate-1-semialdehyde 2,1-aminomutase from Prochlorococcus marinus subsp. pastoris (strain CCMP1986 / NIES-2087 / MED4).